A 104-amino-acid polypeptide reads, in one-letter code: Large ribosomal subunit protein uL23 (104 aa).

It belongs to the universal ribosomal protein uL23 family. In terms of assembly, part of the 50S ribosomal subunit. Contacts protein L29, and trigger factor when it is bound to the ribosome.

Functionally, one of the early assembly proteins it binds 23S rRNA. One of the proteins that surrounds the polypeptide exit tunnel on the outside of the ribosome. Forms the main docking site for trigger factor binding to the ribosome. The chain is Large ribosomal subunit protein uL23 from Ralstonia pickettii (strain 12J).